The sequence spans 417 residues: Spermidine/putrescine import ATP-binding protein PotA (417 aa).

An ABC transporter domain is found at 5-308 (IILKDLTKVF…PANRFVAQFV (304 aa)). Position 37-44 (37-44 (GPSGCGKT)) interacts with ATP. The segment at 105–177 (DFNSKIKANL…TALKCKKINK (73 aa)) is insert.

Belongs to the ABC transporter superfamily. Spermidine/putrescine importer (TC 3.A.1.11.1) family. In terms of assembly, the complex is composed of two ATP-binding proteins (PotA), two transmembrane proteins (PotB and PotC) and a solute-binding protein (PotD).

It is found in the cell membrane. The catalysed reaction is ATP + H2O + polyamine-[polyamine-binding protein]Side 1 = ADP + phosphate + polyamineSide 2 + [polyamine-binding protein]Side 1.. Functionally, part of the ABC transporter complex PotABCD involved in spermidine/putrescine import. Responsible for energy coupling to the transport system. This chain is Spermidine/putrescine import ATP-binding protein PotA, found in Onion yellows phytoplasma (strain OY-M).